We begin with the raw amino-acid sequence, 810 residues long: Abnormal pharyngeal pumping eat-20 (810 aa).

The N-terminal stretch at 1-20 (MTTFCRVLLIFGIYVAVCCA) is a signal peptide. At 21 to 748 (QSVEDDVFHF…GKQSSAAASW (728 aa)) the chain is on the extracellular side. N-linked (GlcNAc...) asparagine glycans are attached at residues Asn90, Asn171, and Asn232. EGF-like domains are found at residues 220-257 (PPSPCANHECHNNGTCLVSQEGAATCLCRNGFTGDRCE), 258-293 (LDVCSSVPCQNGGVCRSNNGIAYCECPPAFTGLLCE), and 301-335 (VAPICRPECSNGQCVFKDGQAQCECRQGFTGANCN). Disulfide bonds link Cys224-Cys235, Cys229-Cys245, Cys247-Cys256, Cys261-Cys272, Cys266-Cys281, Cys283-Cys292, Cys305-Cys314, Cys309-Cys323, and Cys325-Cys334. Asn371 carries an N-linked (GlcNAc...) asparagine glycan. Low complexity predominate over residues 522–531 (FAPTTGTQQP). 2 disordered regions span residues 522–567 (FAPT…STMQ) and 684–738 (PHPQ…HTSS). Acidic residues predominate over residues 542 to 558 (DENEEEEEEETTEETEE). The chain crosses the membrane as a helical span at residues 749-769 (IIAIIALIVLGLLLLATSLFI). The Cytoplasmic portion of the chain corresponds to 770–810 (LRYIRQSRKLHGKYNPAREEHNLSAAYAMPMSHIAKEERLI).

As to expression, highly expressed in the pharynx, circumpharyngeal cells, pharyngeal-intestinal valve and a subset of neurons in larval and embryonic stages. Also moderately expressed in the lining of the intestine, coelomocytes, labial process bundles and some hypodermal cells. In adults, it is predominantly expressed in the pharynx, the pharyngeal-intenstinal valve, some circumpharyngeal cells, m3, m4 and m6 pharyngeal muscles, and IL1, OLQ, BAG and ALN neurons. Weaker expression is observed in labial process bundles, coelomocytes, the ventral hypodermal ridge, the vulval hypodermis and the sensory rays of the adult male tail.

Its subcellular location is the membrane. Its function is as follows. Regulates pharyngeal pumping during feeding. This is Abnormal pharyngeal pumping eat-20 (eat-20) from Caenorhabditis elegans.